The sequence spans 180 residues: Inner membrane-spanning protein YciB (180 aa).

6 helical membrane-spanning segments follow: residues 4–24, 25–45, 49–69, 76–96, 118–138, and 150–170; these read FLSE…GGGI, QHAT…CYVI, VSKL…ITLI, IKIK…MSGI, ITLS…NEVV, and FKVF…LPLL.

Belongs to the YciB family.

It is found in the cell inner membrane. Plays a role in cell envelope biogenesis, maintenance of cell envelope integrity and membrane homeostasis. The protein is Inner membrane-spanning protein YciB of Rickettsia rickettsii (strain Iowa).